We begin with the raw amino-acid sequence, 637 residues long: tRNA uridine 5-carboxymethylaminomethyl modification enzyme MnmG (637 aa).

Residues 15–20, Ile-127, and Ser-182 each bind FAD; that span reads GAGHAG. 276–290 lines the NAD(+) pocket; sequence GPRYCPSIEDKIVRF. Gln-373 contributes to the FAD binding site.

It belongs to the MnmG family. In terms of assembly, homodimer. Heterotetramer of two MnmE and two MnmG subunits. The cofactor is FAD.

The protein localises to the cytoplasm. In terms of biological role, NAD-binding protein involved in the addition of a carboxymethylaminomethyl (cmnm) group at the wobble position (U34) of certain tRNAs, forming tRNA-cmnm(5)s(2)U34. The chain is tRNA uridine 5-carboxymethylaminomethyl modification enzyme MnmG from Streptococcus pneumoniae (strain ATCC BAA-255 / R6).